A 284-amino-acid chain; its full sequence is 2-dehydro-3-deoxyphosphooctonate aldolase (284 aa).

This sequence belongs to the KdsA family.

The protein resides in the cytoplasm. The enzyme catalyses D-arabinose 5-phosphate + phosphoenolpyruvate + H2O = 3-deoxy-alpha-D-manno-2-octulosonate-8-phosphate + phosphate. Its pathway is carbohydrate biosynthesis; 3-deoxy-D-manno-octulosonate biosynthesis; 3-deoxy-D-manno-octulosonate from D-ribulose 5-phosphate: step 2/3. The protein operates within bacterial outer membrane biogenesis; lipopolysaccharide biosynthesis. The chain is 2-dehydro-3-deoxyphosphooctonate aldolase from Salmonella enteritidis PT4 (strain P125109).